The sequence spans 102 residues: uncharacterized protein (102 aa).

A signal peptide spans Met1–Ala22. A lipid anchor (N-palmitoyl cysteine) is attached at Cys23. Cys23 is lipidated: S-diacylglycerol cysteine.

The protein belongs to the MG185/MG260 family.

The protein resides in the cell membrane. This is an uncharacterized protein from Mycoplasma pneumoniae (strain ATCC 29342 / M129 / Subtype 1) (Mycoplasmoides pneumoniae).